A 94-amino-acid chain; its full sequence is Putative toxin RelE4 (94 aa).

The protein belongs to the RelE toxin family.

Functionally, toxic component of a type II toxin-antitoxin (TA) system. Its cognate antitoxin is RelB4 (Potential). This is Putative toxin RelE4 (relE4) from Methanocaldococcus jannaschii (strain ATCC 43067 / DSM 2661 / JAL-1 / JCM 10045 / NBRC 100440) (Methanococcus jannaschii).